The following is a 360-amino-acid chain: MRKEWLWVGIASVLLSACIDQPPAPQQQVQQTYSGPVEEIGGAEPRYEPFNPNVNQDYKVNGQSYRIIKDPQNFSQIGLASSYGEEARGNTTATGEIFDPNALTAAHPTLPIPSYVRVTNVSNGRQIVVRVNDRGPYTPGRVIDLSRAAADRLNISNNTKVKIDFINVAPDGSLSGPGMVGTTIAKQSYALPSRPDLTSSGMGTPMQQDAPATGAAVQAIDNSQLSGTDATQPVASQSSGFLRAPTPVPAGVLESSEPVIDSAPVTPPVVANPGPVTTTPTSSAISGGYVVQVGALSDAQRAQSWQQSLSQRFGVPGKVSNSGSIYRVQLGPFSHRQQAVDLQQRLSNEAQQQSFIVAAP.

A signal peptide spans 1–17 (MRKEWLWVGIASVLLSA). Cys-18 carries N-palmitoyl cysteine lipidation. Cys-18 carries the S-diacylglycerol cysteine lipid modification. The 77-residue stretch at 283–359 (SAISGGYVVQ…AQQQSFIVAA (77 aa)) folds into the SPOR domain.

Belongs to the RlpA family.

Its subcellular location is the cell membrane. Its function is as follows. Lytic transglycosylase with a strong preference for naked glycan strands that lack stem peptides. In Yersinia pestis, this protein is Endolytic peptidoglycan transglycosylase RlpA.